The sequence spans 328 residues: Cytochrome c biogenesis protein CcsA (328 aa).

Transmembrane regions (helical) follow at residues 13–33 (ISFS…LVNL), 46–66 (GIVI…IYSG), 73–93 (LYES…VSYF), 101–121 (LNAI…SGLL), 146–166 (MILG…LLVI), 234–254 (IISL…VWAN), 263–283 (WDPK…YLHI), and 295–315 (AIVA…VNLL).

The protein belongs to the CcmF/CycK/Ccl1/NrfE/CcsA family. May interact with Ccs1.

The protein localises to the plastid. Its subcellular location is the chloroplast thylakoid membrane. Its function is as follows. Required during biogenesis of c-type cytochromes (cytochrome c6 and cytochrome f) at the step of heme attachment. The protein is Cytochrome c biogenesis protein CcsA of Barbarea verna (Land cress).